Consider the following 213-residue polypeptide: Glycerol-3-phosphate acyltransferase (213 aa).

6 helical membrane passes run 3–23 (ILLLILIAYLLGSIQTGLWIG), 54–76 (TITFLVDMLKGTLAVLLPIWLGI), 83–100 (IIGFFAIIGHVFPFFTGF), 110–130 (AGVLLGFVPLYFVFLLLVFAL), 142–162 (SITAAVVGLITLATFPAIHFL), and 163–183 (LDGYDPIFSAVLIIIVLVIIF).

It belongs to the PlsY family. Probably interacts with PlsX.

It localises to the cell membrane. The enzyme catalyses an acyl phosphate + sn-glycerol 3-phosphate = a 1-acyl-sn-glycero-3-phosphate + phosphate. It participates in lipid metabolism; phospholipid metabolism. Catalyzes the transfer of an acyl group from acyl-phosphate (acyl-PO(4)) to glycerol-3-phosphate (G3P) to form lysophosphatidic acid (LPA). This enzyme utilizes acyl-phosphate as fatty acyl donor, but not acyl-CoA or acyl-ACP. In Streptococcus thermophilus (strain ATCC BAA-491 / LMD-9), this protein is Glycerol-3-phosphate acyltransferase.